A 185-amino-acid chain; its full sequence is Ribosome-recycling factor (185 aa).

The tract at residues 142–165 (IVKDGDAGEDEGSRAEKELDGLTK) is disordered.

The protein belongs to the RRF family.

The protein localises to the cytoplasm. Functionally, responsible for the release of ribosomes from messenger RNA at the termination of protein biosynthesis. May increase the efficiency of translation by recycling ribosomes from one round of translation to another. This Renibacterium salmoninarum (strain ATCC 33209 / DSM 20767 / JCM 11484 / NBRC 15589 / NCIMB 2235) protein is Ribosome-recycling factor.